The sequence spans 415 residues: Serine hydroxymethyltransferase (415 aa).

Residues Leu-117 and 121–123 (GHL) contribute to the (6S)-5,6,7,8-tetrahydrofolate site. Lys-226 carries the post-translational modification N6-(pyridoxal phosphate)lysine. Glu-241 is a (6S)-5,6,7,8-tetrahydrofolate binding site.

The protein belongs to the SHMT family. Homodimer. The cofactor is pyridoxal 5'-phosphate.

Its subcellular location is the cytoplasm. The catalysed reaction is (6R)-5,10-methylene-5,6,7,8-tetrahydrofolate + glycine + H2O = (6S)-5,6,7,8-tetrahydrofolate + L-serine. Its pathway is one-carbon metabolism; tetrahydrofolate interconversion. It participates in amino-acid biosynthesis; glycine biosynthesis; glycine from L-serine: step 1/1. In terms of biological role, catalyzes the reversible interconversion of serine and glycine with tetrahydrofolate (THF) serving as the one-carbon carrier. This reaction serves as the major source of one-carbon groups required for the biosynthesis of purines, thymidylate, methionine, and other important biomolecules. Also exhibits THF-independent aldolase activity toward beta-hydroxyamino acids, producing glycine and aldehydes, via a retro-aldol mechanism. This is Serine hydroxymethyltransferase from Bacillus subtilis (strain 168).